Reading from the N-terminus, the 201-residue chain is Cell division protein SepF (201 aa).

The span at 27 to 38 (VQERTSVQRDSR) shows a compositional bias: basic and acidic residues. Positions 27–99 (VQERTSVQRD…PRVQNKDSVR (73 aa)) are disordered. Polar residues predominate over residues 43 to 54 (QEASQRSHMTNS). Basic and acidic residues predominate over residues 72-81 (NRQERQRVQR). Residues 83–92 (NAYQQATPRV) show a composition bias toward polar residues.

Belongs to the SepF family. As to quaternary structure, homodimer. Interacts with FtsZ.

It localises to the cytoplasm. Functionally, cell division protein that is part of the divisome complex and is recruited early to the Z-ring. Probably stimulates Z-ring formation, perhaps through the cross-linking of FtsZ protofilaments. Its function overlaps with FtsA. This is Cell division protein SepF from Streptococcus agalactiae serotype V (strain ATCC BAA-611 / 2603 V/R).